The primary structure comprises 71 residues: Prokaryotic ubiquitin-like protein Pup (71 aa).

Residues 1–18 show a composition bias toward basic and acidic residues; that stretch reads MPEKDTGGQHRATRRTEE. Positions 1-36 are disordered; it reads MPEKDTGGQHRATRRTEEHDETIDEATATSDVQERR. The ARC ATPase binding stretch occupies residues 27–65; it reads TATSDVQERREKLDADVDAILDEIDDVLEENAEEFVRSY. Residues 30–59 adopt a coiled-coil conformation; sequence SDVQERREKLDADVDAILDEIDDVLEENAE. Glutamate 71 participates in a covalent cross-link: Isoglutamyl lysine isopeptide (Glu-Lys) (interchain with K-? in acceptor proteins).

This sequence belongs to the prokaryotic ubiquitin-like protein family. In terms of assembly, strongly interacts with the proteasome-associated ATPase ARC through a hydrophobic interface; the interacting region of Pup lies in its C-terminal half. There is one Pup binding site per ARC hexamer ring.

The protein operates within protein degradation; proteasomal Pup-dependent pathway. Its function is as follows. Protein modifier that is covalently attached to lysine residues of substrate proteins, thereby targeting them for proteasomal degradation. The tagging system is termed pupylation. The chain is Prokaryotic ubiquitin-like protein Pup from Acidothermus cellulolyticus (strain ATCC 43068 / DSM 8971 / 11B).